Here is a 394-residue protein sequence, read N- to C-terminus: Phosphatidylinositol 4-phosphate 5-kinase-like protein 1 (394 aa).

The 358-residue stretch at 36–393 (DKQSRLGLFE…RLCQWVEAHT (358 aa)) folds into the PIPK domain.

As to quaternary structure, heterodimerizes with other type I phosphatidylinositol 4-phosphate 5-kinase.

It localises to the cytoplasm. It is found in the membrane. It catalyses the reaction a 1,2-diacyl-sn-glycero-3-phospho-(1D-myo-inositol 4-phosphate) + ATP = a 1,2-diacyl-sn-glycero-3-phospho-(1D-myo-inositol-4,5-bisphosphate) + ADP + H(+). May act as a scaffold to localize and regulate type I PI(4)P 5-kinases to specific compartments within the cell, where they generate PI(4,5)P2 for actin nucleation, signaling and scaffold protein recruitment and conversion to PI(3,4,5)P3. The polypeptide is Phosphatidylinositol 4-phosphate 5-kinase-like protein 1 (PIP5KL1) (Homo sapiens (Human)).